Reading from the N-terminus, the 404-residue chain is Cysteine desulfurase IscS (404 aa).

Pyridoxal 5'-phosphate-binding positions include 75 to 76 (AT), Asn155, Gln183, and 203 to 205 (SAH). Lys206 carries the post-translational modification N6-(pyridoxal phosphate)lysine. A pyridoxal 5'-phosphate-binding site is contributed by Thr243. The active-site Cysteine persulfide intermediate is the Cys328. Cys328 is a [2Fe-2S] cluster binding site.

This sequence belongs to the class-V pyridoxal-phosphate-dependent aminotransferase family. NifS/IscS subfamily. As to quaternary structure, homodimer. Forms a heterotetramer with IscU, probably interacts with other sulfur acceptors. Requires pyridoxal 5'-phosphate as cofactor.

Its subcellular location is the cytoplasm. It catalyses the reaction (sulfur carrier)-H + L-cysteine = (sulfur carrier)-SH + L-alanine. It functions in the pathway cofactor biosynthesis; iron-sulfur cluster biosynthesis. Its activity is regulated as follows. Inhibited by equimolar N-iodoacetyl-N'-(5-sulfo-1-naphthyl)ethylenediamine. Master enzyme that delivers sulfur to a number of partners involved in Fe-S cluster assembly, tRNA modification or cofactor biosynthesis. Catalyzes the removal of elemental sulfur from cysteine to produce alanine via an enzyme-bound persulfide intermediate. Functions as a sulfur delivery protein for Fe-S cluster synthesis. Cluster assembly on IscU homodimers proceeds sequentially from 1 2Fe-2S per dimer, to 2 2Fe-2S per dimer and finally 1 4Fe-4S per dimer. The chain is Cysteine desulfurase IscS from Azotobacter vinelandii.